Here is a 198-residue protein sequence, read N- to C-terminus: Penicillin-binding protein activator LpoB (198 aa).

The first 19 residues, 1-19 (MIRSVNRTGALMMALILSG), serve as a signal peptide directing secretion. C20 carries N-palmitoyl cysteine lipidation. A lipid anchor (S-diacylglycerol cysteine) is attached at C20. Residues 26–37 (QPAPVEPTQPVE) show a composition bias toward low complexity. The disordered stretch occupies residues 26–59 (QPAPVEPTQPVEPVQPVPQPEQPIPQPQPVPQPP). Residues 38–59 (PVQPVPQPEQPIPQPQPVPQPP) are compositionally biased toward pro residues.

It belongs to the LpoB family. As to quaternary structure, interacts with PBP1b.

It localises to the cell outer membrane. In terms of biological role, regulator of peptidoglycan synthesis that is essential for the function of penicillin-binding protein 1B (PBP1b). The chain is Penicillin-binding protein activator LpoB from Pantoea ananatis (strain LMG 20103).